The chain runs to 742 residues: MATKYPKFSRDLAQDPTTRRIWYAIATGNDFESHDGITEENLYQKIFATHFGHVAIIFLWASSLLFHVAWQGNFEQWIKDPLHIRPIAHAIWDPHFGEPAIEAFSQGGANYPVNIAYSGVYHWWYTIGMRTNNDLYQGSIFLLLLAALFLFAGWLHLQPKFRPSLTWFKSAEPRLNHHLAGLFGVSSLAWAGHLIHVAIPESRGVHVGWRNFLTTLPHPAGLTPFWMGNWGVYAENADTTGHIFGTSQGAGTAILTFLGGFHPQTESLWLTDMAHHHLAIAVIFIIAGHMYRTNFGIGHSIKEMLNARQFFGIRTEGQFNLPHQGLYDTYNNSLHFQLSIHLAALGTALSLVAQHMYSLPPYAFIAKDFTTQAALYTHHQYIAGFLMVGAFAHAGIFWVRDYDPEQNQGNVLDRVLKHKEAIISHLSWVSLFLGFHTLGLYVHNDVVVAFGTPEKQILIEPVFAQFIQAAHGKLLYGMDTLLSNPDSIAYTAWPNHANVWLPNWLEAINSGTNSLFLTIGPGDFLVHHAIALGLHTTTLICVKGALDARGTKLMPDKKDFGFTFPCDGPGRGGTCQTSSWEQSFYLALFWMLNLLGWVTFYWHWKHLGVWQGNVAQFNENSTYLMGWFRDYLWANSAQLINGYNPYGTNNLSVWAWMFLFGHLVWATGFMFLISWRGYWQELIETLVWAHERTPLANLVRWKDKPVALSIVQGWLVGLAHFTVGYILTYAAFLIASTAGKFG.

Helical transmembrane passes span 46–69 (IFAT…FHVA), 135–158 (LYQG…LHLQ), 175–199 (LNHH…HVAI), 273–291 (MAHH…GHMY), 334–357 (LHFQ…QHMY), 373–399 (AALY…IFWV), 421–443 (AIIS…LYVH), and 524–542 (FLVH…LICV). Residues C566 and C575 each coordinate [4Fe-4S] cluster. 2 helical membrane passes run 583-604 (SFYL…YWHW) and 651-673 (LSVW…MFLI). Residues H662, M670, and Y678 each coordinate chlorophyll a. W679 contacts phylloquinone. A helical membrane pass occupies residues 715 to 735 (LVGLAHFTVGYILTYAAFLIA).

The protein belongs to the PsaA/PsaB family. As to quaternary structure, the PsaA/B heterodimer binds the P700 chlorophyll special pair and subsequent electron acceptors. PSI consists of a core antenna complex that captures photons, and an electron transfer chain that converts photonic excitation into a charge separation. The cyanobacterial PSI reaction center is composed of one copy each of PsaA,B,C,D,E,F,I,J,K,L,M and X, and forms trimeric complexes. PSI electron transfer chain: 5 chlorophyll a, 1 chlorophyll a', 2 phylloquinones and 3 4Fe-4S clusters. PSI core antenna: 90 chlorophyll a, 22 carotenoids, 3 phospholipids and 1 galactolipid. P700 is a chlorophyll a/chlorophyll a' dimer, A0 is one or more chlorophyll a, A1 is one or both phylloquinones and FX is a shared 4Fe-4S iron-sulfur center. is required as a cofactor.

It is found in the cellular thylakoid membrane. It carries out the reaction reduced [plastocyanin] + hnu + oxidized [2Fe-2S]-[ferredoxin] = oxidized [plastocyanin] + reduced [2Fe-2S]-[ferredoxin]. In terms of biological role, psaA and PsaB bind P700, the primary electron donor of photosystem I (PSI), as well as the electron acceptors A0, A1 and FX. PSI is a plastocyanin/cytochrome c6-ferredoxin oxidoreductase, converting photonic excitation into a charge separation, which transfers an electron from the donor P700 chlorophyll pair to the spectroscopically characterized acceptors A0, A1, FX, FA and FB in turn. Oxidized P700 is reduced on the lumenal side of the thylakoid membrane by plastocyanin or cytochrome c6. The protein is Photosystem I P700 chlorophyll a apoprotein A2 2 of Trichormus variabilis (strain ATCC 29413 / PCC 7937) (Anabaena variabilis).